Consider the following 328-residue polypeptide: DNA-directed RNA polymerase subunit alpha (328 aa).

Residues 1 to 232 (MHNSLAELIK…QHLAILVDLK (232 aa)) are alpha N-terminal domain (alpha-NTD). The alpha C-terminal domain (alpha-CTD) stretch occupies residues 246–328 (FDPLLLHPVD…PPEGLKKLNQ (83 aa)).

Belongs to the RNA polymerase alpha chain family. As to quaternary structure, homodimer. The RNAP catalytic core consists of 2 alpha, 1 beta, 1 beta' and 1 omega subunit. When a sigma factor is associated with the core the holoenzyme is formed, which can initiate transcription.

It catalyses the reaction RNA(n) + a ribonucleoside 5'-triphosphate = RNA(n+1) + diphosphate. In terms of biological role, DNA-dependent RNA polymerase catalyzes the transcription of DNA into RNA using the four ribonucleoside triphosphates as substrates. The polypeptide is DNA-directed RNA polymerase subunit alpha (Methylococcus capsulatus (strain ATCC 33009 / NCIMB 11132 / Bath)).